The chain runs to 156 residues: Succinate dehydrogenase assembly factor 2-B, mitochondrial (156 aa).

The N-terminal 12 residues, 1 to 12 (MLRQILSSAVAK), are a transit peptide targeting the mitochondrion.

The protein belongs to the SDHAF2 family. As to quaternary structure, interacts with the flavoprotein subunit within the SDH catalytic dimer.

It localises to the mitochondrion matrix. Functionally, plays an essential role in the assembly of succinate dehydrogenase (SDH), an enzyme complex (also referred to as respiratory complex II) that is a component of both the tricarboxylic acid (TCA) cycle and the mitochondrial electron transport chain, and which couples the oxidation of succinate to fumarate with the reduction of ubiquinone (coenzyme Q) to ubiquinol. Required for flavinylation (covalent attachment of FAD) of the flavoprotein subunit of the SDH catalytic dimer. The protein is Succinate dehydrogenase assembly factor 2-B, mitochondrial of Drosophila willistoni (Fruit fly).